The primary structure comprises 305 residues: Acetaldehyde dehydrogenase (305 aa).

Position 13 to 16 (13 to 16) interacts with NAD(+); sequence SGNI. Cys-128 (acyl-thioester intermediate) is an active-site residue. NAD(+)-binding positions include 159–167 and Asn-278; that span reads SAGPGTRQN.

This sequence belongs to the acetaldehyde dehydrogenase family.

The enzyme catalyses acetaldehyde + NAD(+) + CoA = acetyl-CoA + NADH + H(+). The chain is Acetaldehyde dehydrogenase from Roseiflexus sp. (strain RS-1).